We begin with the raw amino-acid sequence, 215 residues long: MIVDKDKLVKSIEEAIKNGKKRRFVETVEMAVNLRNVDMKKPENRIDTVVNLPHGLGKPRKIGVFAKGDTALKAKEAGADVVITPEEIDELAKDKRRAKKLANSIDFFIAEAPLMPEIGRKLGPVLGPRGKIPQPIPPLADPKPFIDRLRNSVKIRTRDKTTFHAPIGSENMDVEKIAENAMEILKVVENKYENPTQVVKSVYVKKTMGPAVRVV.

The protein belongs to the universal ribosomal protein uL1 family. In terms of assembly, part of the 50S ribosomal subunit.

In terms of biological role, binds directly to 23S rRNA. Probably involved in E site tRNA release. Protein L1 is also a translational repressor protein, it controls the translation of its operon by binding to its mRNA. The chain is Large ribosomal subunit protein uL1 from Archaeoglobus fulgidus (strain ATCC 49558 / DSM 4304 / JCM 9628 / NBRC 100126 / VC-16).